A 549-amino-acid chain; its full sequence is RPARSHAKSARSVAETMGNYHPHGDASIYDTLVRMAQPWSLRYPLVDGQGNFGSPGNVPPAAMRYCVTGDALVRLPFGQSMRIADVVPGARPNSDNAVELKVLDRHGNPVAADRLFHSGDHQTYMVRTAEGYEVTGTANHPLLCLVDVGGVPTLLWKLIEEIHPDDYVALQRTPPMELGPADWHDTMEALLLGAFISEGCVSETRAGFANLDRDYFTMVARAYDAVVGDKRDVYQQTIASGSLQHTLYTQNVTALKQSRLWQILGMRSADTYVPEWMWHSPAAVKRVFLQALFEGDGSCSRRPHNTIQISYNTVSKQLAMDVQQMLLEFGVISRRYLHAAGEYKVVITDRAQAELFPKQIGFGGAKQTELSKILAAMPPCAGRDSDHVPGLARFIRRHCDSRWVDKEWLHKHNIDHLSRWRRDGAEILSHIADPDVRTIATDLTDGRFYYARVASVTDTGVQPVYSLRVDTDDHAFLTNGFVSHNTEARLTPLAMEMLREIDEETVDFIPNYDGRVQEPTVLPSRFPNLLANGSGGIAVGMATNIPPHN.

Residues 1–549 form the Topo IIA-type catalytic domain; sequence RPARSHAKSA…GMATNIPPHN (549 aa). Tyrosine 65 functions as the O-(5'-phospho-DNA)-tyrosine intermediate in the catalytic mechanism. Residues 191–331 enclose the DOD-type homing endonuclease domain; sequence LLGAFISEGC…VQQMLLEFGV (141 aa).

The protein belongs to the type II topoisomerase GyrA/ParC subunit family. As to quaternary structure, heterotetramer, composed of two GyrA and two GyrB chains. In the heterotetramer, GyrA contains the active site tyrosine that forms a transient covalent intermediate with DNA, while GyrB binds cofactors and catalyzes ATP hydrolysis. Post-translationally, this protein undergoes a protein self splicing that involves a post-translational excision of the intervening region (intein) followed by peptide ligation.

Its subcellular location is the cytoplasm. It catalyses the reaction ATP-dependent breakage, passage and rejoining of double-stranded DNA.. In terms of biological role, a type II topoisomerase that negatively supercoils closed circular double-stranded (ds) DNA in an ATP-dependent manner to modulate DNA topology and maintain chromosomes in an underwound state. Negative supercoiling favors strand separation, and DNA replication, transcription, recombination and repair, all of which involve strand separation. Also able to catalyze the interconversion of other topological isomers of dsDNA rings, including catenanes and knotted rings. Type II topoisomerases break and join 2 DNA strands simultaneously in an ATP-dependent manner. The sequence is that of DNA gyrase subunit A (gyrA) from Mycobacterium kansasii.